A 344-amino-acid polypeptide reads, in one-letter code: L-rhamnose-proton symporter (344 aa).

Helical transmembrane passes span 4 to 24 (PILL…CFYA), 38 to 58 (WSLG…WWLL), 68 to 88 (FDMA…IGNI), 101 to 121 (MGIG…TPVL), 137 to 157 (TLLG…AGLL), 175 to 195 (LILA…MDAA), 207 to 227 (INAL…GAVV), 255 to 275 (LIAN…QFFF), 290 to 310 (ISWM…GLLF), and 324 to 344 (LVLG…GMAA).

The protein belongs to the L-rhamnose transporter (TC 2.A.7.6) family.

The protein resides in the cell inner membrane. The enzyme catalyses L-rhamnopyranose(in) + H(+)(in) = L-rhamnopyranose(out) + H(+)(out). Uptake of L-rhamnose across the cytoplasmic membrane with the concomitant transport of protons into the cell (symport system). The protein is L-rhamnose-proton symporter of Pectobacterium carotovorum subsp. carotovorum (strain PC1).